The following is a 427-amino-acid chain: MHSYIVEGGYKIGGQITASGNKNAALPCILAALLTDEEVILENIPNINDVKVVLDILNDIGADIAREGNTLKIKVLNIVKTEIDSSFTDLIRASILLLGPFVSRFGKIDMALPGGDVIGKRRLDTHFYGLCKLGAKLSTKDRRIVLKANKLVGAEMFLDEASVTATENIIMAAVLAEGNTVIMNAACEPHVQDLCNMLNSMGANILGIGSNVLEIKGVKKLSGTVFRIGADFMQVGSLISLAALTGGELEIKKADPQHFRLIRHVYSRLGINFEYDRENVYVRNKQELKVKLDFGGHIPKIDDGPWPAFPTDLMSIIVVTATQVEGTVLVFEKMFESRMFFVDKLIKMGARIVLCDPHRVVVTGKSSLKGNVLSSPDVRAGMSLLIAAFVAEGRSEIQNVYQIERGYEDVVNKLINLGAKIKKVKSQ.

22–23 (KN) contacts phosphoenolpyruvate. R92 serves as a coordination point for UDP-N-acetyl-alpha-D-glucosamine. The Proton donor role is filled by D116. UDP-N-acetyl-alpha-D-glucosamine-binding residues include D312 and M334.

This sequence belongs to the EPSP synthase family. MurA subfamily.

It is found in the cytoplasm. The catalysed reaction is phosphoenolpyruvate + UDP-N-acetyl-alpha-D-glucosamine = UDP-N-acetyl-3-O-(1-carboxyvinyl)-alpha-D-glucosamine + phosphate. The protein operates within cell wall biogenesis; peptidoglycan biosynthesis. In terms of biological role, cell wall formation. Adds enolpyruvyl to UDP-N-acetylglucosamine. The protein is UDP-N-acetylglucosamine 1-carboxyvinyltransferase of Borreliella burgdorferi (strain ATCC 35210 / DSM 4680 / CIP 102532 / B31) (Borrelia burgdorferi).